Reading from the N-terminus, the 308-residue chain is Formamidopyrimidine-DNA glycosylase (308 aa).

The active-site Schiff-base intermediate with DNA is the P2. Residue E3 is the Proton donor of the active site. The active-site Proton donor; for beta-elimination activity is the K61. Positions 100, 120, and 181 each coordinate DNA. The FPG-type zinc finger occupies 267–301 (AVYGQEGRPCPRCGALVRRDAFMNRSSFSCPVCQP). The active-site Proton donor; for delta-elimination activity is R291.

Belongs to the FPG family. In terms of assembly, monomer. Zn(2+) serves as cofactor.

The catalysed reaction is Hydrolysis of DNA containing ring-opened 7-methylguanine residues, releasing 2,6-diamino-4-hydroxy-5-(N-methyl)formamidopyrimidine.. It carries out the reaction 2'-deoxyribonucleotide-(2'-deoxyribose 5'-phosphate)-2'-deoxyribonucleotide-DNA = a 3'-end 2'-deoxyribonucleotide-(2,3-dehydro-2,3-deoxyribose 5'-phosphate)-DNA + a 5'-end 5'-phospho-2'-deoxyribonucleoside-DNA + H(+). In terms of biological role, involved in base excision repair of DNA damaged by oxidation or by mutagenic agents. Acts as a DNA glycosylase that recognizes and removes damaged bases. Has a preference for oxidized purines, such as 7,8-dihydro-8-oxoguanine (8-oxoG). Has AP (apurinic/apyrimidinic) lyase activity and introduces nicks in the DNA strand. Cleaves the DNA backbone by beta-delta elimination to generate a single-strand break at the site of the removed base with both 3'- and 5'-phosphates. The protein is Formamidopyrimidine-DNA glycosylase of Kineococcus radiotolerans (strain ATCC BAA-149 / DSM 14245 / SRS30216).